A 443-amino-acid polypeptide reads, in one-letter code: MPYIPHTPEELQEMLSVVGVRDLDGLFADIPPEMRPKQFNLPKGQSEAAVCAYFEGLAAKNCPDLVSFLGAGYYAHDIPKAVDALAGRSEFYTSYTPYQPECSQGTLQAIFEFQTAISRLLGMDCANASVYDGGTAIFEAAMMAVRSTRRRVLVVDEAVNPIWRVMLASYISSLDLELKTVQQEKGVSRLDALMAAIDDTTAAVIVQNPNFFGAVADYTQVFAKARAHKAFGVISVYPVMQSVLKTPGEMGADVAVAEGQSIGMPLSFGGPYLGLMTCRKEHIRQFPGRIVGRTTDVDGKTGYVLTLQAREQHIRRAKATSNICSNQALCALRALIHLSLLGPCGLTRLAENNMALTRYAVERLTSIKGIELLNDAPYGNEVALRLPMPAQMLVDALSAHGCVPGYPLGRYYPGMEDVLLLACTERNSRQQIGMLAETVGGLL.

It belongs to the GcvP family. N-terminal subunit subfamily. As to quaternary structure, the glycine cleavage system is composed of four proteins: P, T, L and H. In this organism, the P 'protein' is a heterodimer of two subunits.

It carries out the reaction N(6)-[(R)-lipoyl]-L-lysyl-[glycine-cleavage complex H protein] + glycine + H(+) = N(6)-[(R)-S(8)-aminomethyldihydrolipoyl]-L-lysyl-[glycine-cleavage complex H protein] + CO2. The glycine cleavage system catalyzes the degradation of glycine. The P protein binds the alpha-amino group of glycine through its pyridoxal phosphate cofactor; CO(2) is released and the remaining methylamine moiety is then transferred to the lipoamide cofactor of the H protein. The protein is Probable glycine dehydrogenase (decarboxylating) subunit 1 of Desulfovibrio desulfuricans (strain ATCC 27774 / DSM 6949 / MB).